The sequence spans 413 residues: Serine/threonine transporter SstT (413 aa).

The next 8 membrane-spanning stretches (helical) occupy residues 19–39 (IFIGLILGLLVALVTPTLQNV), 61–81 (AVAPILIFVLVMAAIANKKIG), 89–109 (IIVLYLLGTFLAALSAVIAGF), 148–168 (ALFKANFVGVLAWSIGLGLAL), 189–209 (IVYVIIAFAPIGVFGLVSETL), 223–243 (LLAVLVGTMLFVAFVVNPILV), 297–317 (IPLGATINMAGAAITVTILTL), and 325–345 (IQISFFSALLLSVVASICACG).

This sequence belongs to the dicarboxylate/amino acid:cation symporter (DAACS) (TC 2.A.23) family.

It localises to the cell inner membrane. The enzyme catalyses L-serine(in) + Na(+)(in) = L-serine(out) + Na(+)(out). It carries out the reaction L-threonine(in) + Na(+)(in) = L-threonine(out) + Na(+)(out). Involved in the import of serine and threonine into the cell, with the concomitant import of sodium (symport system). The protein is Serine/threonine transporter SstT of Pasteurella multocida (strain Pm70).